A 159-amino-acid chain; its full sequence is Xanthine dehydrogenase iron-sulfur-binding subunit (159 aa).

The 2Fe-2S ferredoxin-type domain occupies 7 to 82; sequence ITIECTINGM…GKEIRTLEGE (76 aa). Positions 44, 49, and 52 each coordinate [2Fe-2S] cluster.

As to quaternary structure, heterotrimer of XdhA, XdhB and XdhC. Requires [2Fe-2S] cluster as cofactor.

It functions in the pathway purine metabolism; hypoxanthine degradation; urate from hypoxanthine: step 1/2. Functionally, iron-sulfur subunit of the xanthine dehydrogenase complex. The polypeptide is Xanthine dehydrogenase iron-sulfur-binding subunit (xdhC) (Escherichia coli O157:H7).